The sequence spans 91 residues: Small ribosomal subunit protein bS20 (91 aa).

Basic and acidic residues predominate over residues 1–21 (MPLHKSAEKRLRQAARRNERN). The interval 1-24 (MPLHKSAEKRLRQAARRNERNRAR) is disordered.

The protein belongs to the bacterial ribosomal protein bS20 family.

In terms of biological role, binds directly to 16S ribosomal RNA. This Chlorobaculum parvum (strain DSM 263 / NCIMB 8327) (Chlorobium vibrioforme subsp. thiosulfatophilum) protein is Small ribosomal subunit protein bS20.